A 510-amino-acid polypeptide reads, in one-letter code: MEDIKDSKVKRFCSKNILIILGFTSILAVIALIAVGLTQNKPLPENVKYGIVLDAGSSHTNLYIYKWPAEKENDTGVVQQLEECQVKGPGISKYAQKTDEIGAYLAECMELSTELIPTSKHHQTPVYLGATAGMRLLRMESEQSADEVLAAVSTSLKSYPFDFQGAKIITGQEEGAYGWITINYLLGRFTQEQSWLSLISDSQKQETFGALDLGGASTQITFVPQNSTIESPENSLQFRLYGEDYTVYTHSFLCYGKDQALWQKLAKDIQVSSGGVLKDPCFNPGYEKVVNVSELYGTPCTKRFEKKLPFDQFRIQGTGDYEQCHQSILELFNNSHCPYSQCAFNGVFLPPLHGSFGAFSAFYFVMDFFKKVAKNSVISQEKMTEITKNFCSKSWEETKTSYPSVKEKYLSEYCFSGAYILSLLQGYNFTDSSWEQIHFMGKIKDSNAGWTLGYMLNLTNMIPAEQPLSPPLPHSTYIGLMVLFSLLLVAVAITGLFIYSKPSYFWKEAV.

The Cytoplasmic segment spans residues 1–16 (MEDIKDSKVKRFCSKN). Residues 17–37 (ILIILGFTSILAVIALIAVGL) form a helical membrane-spanning segment. Residues 38 to 478 (TQNKPLPENV…SPPLPHSTYI (441 aa)) lie on the Extracellular side of the membrane. An N-linked (GlcNAc...) asparagine glycan is attached at Asn-73. An intrachain disulfide couples Cys-84 to Cys-108. The active-site Proton acceptor is the Glu-174. 3 N-linked (GlcNAc...) asparagine glycosylation sites follow: Asn-226, Asn-291, and Asn-333. 2 cysteine pairs are disulfide-bonded: Cys-254–Cys-300 and Cys-281–Cys-324. Intrachain disulfides connect Cys-337–Cys-342 and Cys-391–Cys-414. Asn-428 and Asn-457 each carry an N-linked (GlcNAc...) asparagine glycan. Residues 479–499 (GLMVLFSLLLVAVAITGLFIY) form a helical membrane-spanning segment. Topologically, residues 500–510 (SKPSYFWKEAV) are cytoplasmic.

The protein belongs to the GDA1/CD39 NTPase family. In terms of assembly, homodimer; disulfide-linked. The cofactor is Ca(2+). Mg(2+) serves as cofactor. Post-translationally, N-glycosylated. In terms of processing, the N-terminus is blocked. Palmitoylated on Cys-13; which is required for caveola targeting.

It is found in the membrane. The protein resides in the caveola. It carries out the reaction a ribonucleoside 5'-triphosphate + 2 H2O = a ribonucleoside 5'-phosphate + 2 phosphate + 2 H(+). The enzyme catalyses a ribonucleoside 5'-triphosphate + H2O = a ribonucleoside 5'-diphosphate + phosphate + H(+). It catalyses the reaction a ribonucleoside 5'-diphosphate + H2O = a ribonucleoside 5'-phosphate + phosphate + H(+). The catalysed reaction is ATP + 2 H2O = AMP + 2 phosphate + 2 H(+). It carries out the reaction ATP + H2O = ADP + phosphate + H(+). The enzyme catalyses ADP + H2O = AMP + phosphate + H(+). It catalyses the reaction CTP + 2 H2O = CMP + 2 phosphate + 2 H(+). The catalysed reaction is CTP + H2O = CDP + phosphate + H(+). It carries out the reaction CDP + H2O = CMP + phosphate + H(+). The enzyme catalyses GTP + 2 H2O = GMP + 2 phosphate + 2 H(+). It catalyses the reaction GTP + H2O = GDP + phosphate + H(+). The catalysed reaction is GDP + H2O = GMP + phosphate + H(+). It carries out the reaction ITP + 2 H2O = IMP + 2 phosphate + 2 H(+). The enzyme catalyses ITP + H2O = IDP + phosphate + H(+). It catalyses the reaction IDP + H2O = IMP + phosphate + H(+). The catalysed reaction is UTP + 2 H2O = UMP + 2 phosphate + 2 H(+). It carries out the reaction UTP + H2O = UDP + phosphate + H(+). The enzyme catalyses UDP + H2O = UMP + phosphate + H(+). Catalyzes the hydrolysis of both di- and triphosphate nucleotides (NDPs and NTPs) and hydrolyze NTPs to nucleotide monophosphates (NMPs) in two distinct successive phosphate-releasing steps, with NDPs as intermediates and participates in the regulation of extracellular levels of nucleotides. By hydrolyzing proinflammatory ATP and platelet-activating ADP to AMP, it blocks platelet aggregation and supports blood flow. The protein is Ectonucleoside triphosphate diphosphohydrolase 1 of Mus musculus (Mouse).